The following is a 256-amino-acid chain: Triosephosphate isomerase (256 aa).

Residue 12 to 14 (NWK) coordinates substrate. Residue His-99 is the Electrophile of the active site. Glu-169 serves as the catalytic Proton acceptor. Substrate contacts are provided by residues Gly-175, Ser-214, and 235 to 236 (GG).

This sequence belongs to the triosephosphate isomerase family. As to quaternary structure, homodimer.

The protein localises to the cytoplasm. It carries out the reaction D-glyceraldehyde 3-phosphate = dihydroxyacetone phosphate. Its pathway is carbohydrate biosynthesis; gluconeogenesis. The protein operates within carbohydrate degradation; glycolysis; D-glyceraldehyde 3-phosphate from glycerone phosphate: step 1/1. Its function is as follows. Involved in the gluconeogenesis. Catalyzes stereospecifically the conversion of dihydroxyacetone phosphate (DHAP) to D-glyceraldehyde-3-phosphate (G3P). This is Triosephosphate isomerase from Rhizobium meliloti (strain 1021) (Ensifer meliloti).